A 428-amino-acid chain; its full sequence is D-serine dehydratase (428 aa).

Residue K57 is modified to N6-(pyridoxal phosphate)lysine. Pyridoxal 5'-phosphate is bound by residues Y203, Y210, T255, G286, and N287. 2 residues coordinate Zn(2+): H398 and C400.

Belongs to the DSD1 family. As to quaternary structure, homodimer. Pyridoxal 5'-phosphate is required as a cofactor. The cofactor is Zn(2+).

The catalysed reaction is D-serine = pyruvate + NH4(+). With respect to regulation, sodium cyanoborohydride, N-ethylmaleimide, hydroxylamine, phenyhydrazin and EDTA are inhibitors of the catalytic activity. Functionally, catalyzes the conversion of D-serine to pyruvate and ammonia. May play a role in D-serine detoxification. This Saccharomyces cerevisiae (strain ATCC 204508 / S288c) (Baker's yeast) protein is D-serine dehydratase.